Consider the following 113-residue polypeptide: Nascent polypeptide-associated complex protein (113 aa).

Residues 5–73 (GMNPAKMKQM…AKEVPKSLEI (69 aa)) form the NAC-A/B domain.

This sequence belongs to the NAC-alpha family. Homodimer. Interacts with the ribosome. Binds ribosomal RNA.

Functionally, contacts the emerging nascent chain on the ribosome. The protein is Nascent polypeptide-associated complex protein of Methanosarcina acetivorans (strain ATCC 35395 / DSM 2834 / JCM 12185 / C2A).